Reading from the N-terminus, the 186-residue chain is Large ribosomal subunit protein uL10 (186 aa).

It belongs to the universal ribosomal protein uL10 family. As to quaternary structure, part of the ribosomal stalk of the 50S ribosomal subunit. The N-terminus interacts with L11 and the large rRNA to form the base of the stalk. The C-terminus forms an elongated spine to which L12 dimers bind in a sequential fashion forming a multimeric L10(L12)X complex.

Functionally, forms part of the ribosomal stalk, playing a central role in the interaction of the ribosome with GTP-bound translation factors. The sequence is that of Large ribosomal subunit protein uL10 from Roseiflexus sp. (strain RS-1).